Here is a 79-residue protein sequence, read N- to C-terminus: Conotoxin MIVA (79 aa).

A signal peptide spans 1–21 (MGMRMMFTVFLLVVLATTVVS). The propeptide occupies 22–38 (IPSDRASDGRNAVVHER). Pro40 carries the 4-hydroxyproline modification. Glu41 carries the post-translational modification 4-carboxyglutamate. Thr45 and Thr47 each carry an O-linked (HexNAc...) threonine glycan. A 4-hydroxyproline mark is found at Pro55, Pro60, Pro61, Pro69, Pro70, and Pro74. Pro74 is subject to Proline amide. Residues 75 to 79 (GRRND) constitute a propeptide that is removed on maturation.

O-linked glycan consists of Hex4-HexNAc2 hexasaccharide. Post-translationally, contains 3 disulfide bonds. In terms of tissue distribution, expressed by the venom duct.

It is found in the secreted. Its function is as follows. Probable neurotoxin with ion channel inhibitor activity. In Conus magus (Magical cone), this protein is Conotoxin MIVA.